The following is a 747-amino-acid chain: MWGFLKRPVVVTADINLSLVALTGMGLLSRLWRLTYPRAVVFDEVYYGQYISFYMKQIFFLDDSGPPFGHMVLALGGYLGGFDGNFLWNRIGAEYSSNVPVWSLRLLPALAGALSVPMAYQIVLELHFSHCAAMGAALLMLIENALITQSRLMLLESVLIFFNLLAVLSYLKFFNCQKHSPFSLSWWFWLTLTGVACSCAVGIKYMGVFTYVLVLGVAAVHAWHLLGDQTLSNVGADVQCCMRPACMGQMQMSQGVCVFCHLLARAVALLVIPVVLYLLFFYVHLILVFRSGPHDQIMSSAFQASLEGGLARITQGQPLEVAFGSQVTLRNVFGKPVPCWLHSHQDTYPMIYENGRGSSHQQQVTCYPFKDVNNWWIVKDPRRHQLVVSSPPRPVRHGDMVQLVHGMTTRSLNTHDVAAPLSPHSQEVSCYIDYNISMPAQNLWRLEIVNRGSDTDVWKTILSEVRFVHVNTSAVLKLSGAHLPDWGYRQLEIVGEKLSRGYHGSTVWNVEEHRYGASQEQRERERELHSPAQVDVSRNLSFMARFSELQWRMLALRSDDSEHKYSSSPLEWVTLDTNIAYWLHPRTSAQIHLLGNIVIWVSGSLALAIYALLSLWYLLRRRRNVHDLPQDAWLRWVLAGALCAGGWAVNYLPFFLMEKTLFLYHYLPALTFQILLLPVVLQHISDHLCRSQLQRSIFSALVVAWYSSACHVSNTLRPLTYGDKSLSPHELKALRWKDSWDILIRKH.

The next 9 membrane-spanning stretches (helical) occupy residues 8 to 28 (PVVV…MGLL), 40 to 60 (VVFD…QIFF), 68 to 88 (FGHM…NFLW), 99 to 119 (VPVW…VPMA), 122 to 142 (IVLE…LMLI), 154 to 174 (LLES…LKFF), 183 to 203 (SLSW…AVGI), 206 to 226 (MGVF…WHLL), and 269 to 289 (LLVI…ILVF). 3 MIR domains span residues 318-381 (PLEV…VKDP), 392-449 (PRPV…LEIV), and 453-513 (SDTD…VEEH). N-linked (GlcNAc...) asparagine glycosylation is found at N435, N471, and N539. The next 3 membrane-spanning stretches (helical) occupy residues 597 to 617 (IVIW…SLWY), 636 to 656 (WVLA…PFFL), and 661 to 681 (LFLY…PVVL).

This sequence belongs to the glycosyltransferase 39 family. Interacts with POMT2. In terms of tissue distribution, widely expressed. Highly expressed in testis, heart and pancreas. Detected at lower levels in kidney, skeletal muscle, brain, placenta, lung and liver.

The protein localises to the endoplasmic reticulum membrane. It carries out the reaction a di-trans,poly-cis-dolichyl beta-D-mannosyl phosphate + L-seryl-[protein] = 3-O-(alpha-D-mannosyl)-L-seryl-[protein] + a di-trans,poly-cis-dolichyl phosphate + H(+). The catalysed reaction is a di-trans,poly-cis-dolichyl beta-D-mannosyl phosphate + L-threonyl-[protein] = 3-O-(alpha-D-mannosyl)-L-threonyl-[protein] + a di-trans,poly-cis-dolichyl phosphate + H(+). Its pathway is protein modification; protein glycosylation. Slightly activated by Mg(2+) and inhibited by both Ca(+) and Mn(2+). EDTA ha no effect on activity in vitro. Functionally, transfers mannosyl residues to the hydroxyl group of serine or threonine residues. Coexpression of both POMT1 and POMT2 is necessary for enzyme activity, expression of either POMT1 or POMT2 alone is insufficient. Essentially dedicated to O-mannosylation of alpha-DAG1 and few other proteins but not of cadherins and protocaherins. This Homo sapiens (Human) protein is Protein O-mannosyl-transferase 1 (POMT1).